A 457-amino-acid chain; its full sequence is Transcription termination factor Rho (457 aa).

The segment at 1–23 is disordered; the sequence is MNTTNKQLTEELNNTESNNDHND. One can recognise a Rho RNA-BD domain in the interval 77-152; sequence LIVGEGVLEV…LKVNRVNFED (76 aa). Residues 200–205, 212–217, and Arg-243 contribute to the ATP site; these read GKGQRA and RTGKTV.

This sequence belongs to the Rho family. As to quaternary structure, homohexamer. The homohexamer assembles into an open ring structure.

In terms of biological role, facilitates transcription termination by a mechanism that involves Rho binding to the nascent RNA, activation of Rho's RNA-dependent ATPase activity, and release of the mRNA from the DNA template. In Rickettsia prowazekii (strain Madrid E), this protein is Transcription termination factor Rho.